A 93-amino-acid chain; its full sequence is UPF0521 protein B (93 aa).

The stretch at 2–58 (SLKEVITSLKNDFHSINKEIDSMKENNEKQEEKIFQEIKKLKLEMELLRKDNLSFKT) forms a coiled coil.

This sequence belongs to the UPF0521 family.

This chain is UPF0521 protein B, found in Dictyostelium discoideum (Social amoeba).